The sequence spans 153 residues: FAD synthase (153 aa).

ATP contacts are provided by residues 9–10 (TF), 14–17 (HPGH), N92, and Y119.

The protein belongs to the archaeal FAD synthase family. As to quaternary structure, homodimer. A divalent metal cation is required as a cofactor.

The enzyme catalyses FMN + ATP + H(+) = FAD + diphosphate. It participates in cofactor biosynthesis; FAD biosynthesis; FAD from FMN: step 1/1. Its function is as follows. Catalyzes the transfer of the AMP portion of ATP to flavin mononucleotide (FMN) to produce flavin adenine dinucleotide (FAD) coenzyme. The protein is FAD synthase of Methanosphaerula palustris (strain ATCC BAA-1556 / DSM 19958 / E1-9c).